Reading from the N-terminus, the 197-residue chain is MTTLYLASGSPRRQELLTQLGFSFEQVVPGIEEQRRAQESAQQYVVRLAREKAQAGVALVPRDLPVLGADTIVVLNGEVLEKPRDAAHAAEMLRLLSGNTHQVMTAVALADSQQTLDCLVVTEVTFRTLSAQDITGYVASGEPLDKAGAYGIQGRGGCFVRKINGSYHAVVGLPLVETYELLSHFNALRDKRDKHDG.

Asp70 (proton acceptor) is an active-site residue.

The protein belongs to the Maf family. YhdE subfamily. Requires a divalent metal cation as cofactor.

Its subcellular location is the cytoplasm. It carries out the reaction dTTP + H2O = dTMP + diphosphate + H(+). It catalyses the reaction UTP + H2O = UMP + diphosphate + H(+). Functionally, nucleoside triphosphate pyrophosphatase that hydrolyzes dTTP and UTP. May have a dual role in cell division arrest and in preventing the incorporation of modified nucleotides into cellular nucleic acids. This Salmonella choleraesuis (strain SC-B67) protein is dTTP/UTP pyrophosphatase (yceF2).